The following is a 135-amino-acid chain: Cytochrome b-c1 complex subunit 6, mitochondrial (135 aa).

The interval 1–70 (MSFFRDLLES…ETADPLDTLR (70 aa)) is disordered. Residues 19 to 64 (EPVEDVEVEQPEDAPEEEVSEETVEEEEDDDEDDDEDDEEEEETAD) are compositionally biased toward acidic residues.

Belongs to the UQCRH/QCR6 family. In terms of assembly, component of the ubiquinol-cytochrome c oxidoreductase (cytochrome b-c1 complex, complex III, CIII), a multisubunit enzyme composed of 10 subunits. The complex is composed of 3 respiratory subunits cytochrome b (COB), cytochrome c1 (CYT1) and Rieske protein (RIP1), 2 core protein subunits COR1 and QCR2, and 5 low-molecular weight protein subunits QCR6, QCR7, QCR8, QCR9 and QCR10. The complex exists as an obligatory dimer and forms supercomplexes (SCs) in the inner mitochondrial membrane with a monomer or a dimer of cytochrome c oxidase (complex IV, CIV), resulting in 2 different assemblies (supercomplexes III(2)IV and III(2)IV(2)).

Its subcellular location is the mitochondrion inner membrane. Component of the ubiquinol-cytochrome c oxidoreductase, a multisubunit transmembrane complex that is part of the mitochondrial electron transport chain which drives oxidative phosphorylation. The complex plays an important role in the uptake of multiple carbon sources present in different host niches. In Candida albicans (strain SC5314 / ATCC MYA-2876) (Yeast), this protein is Cytochrome b-c1 complex subunit 6, mitochondrial.